The following is a 161-amino-acid chain: Phage-like element PBSX protein XkdI (161 aa).

It to B.subtilis YqbI.

The chain is Phage-like element PBSX protein XkdI (xkdI) from Bacillus subtilis (strain 168).